Reading from the N-terminus, the 336-residue chain is Holliday junction branch migration complex subunit RuvB (336 aa).

Residues 1–182 (MKERIVNLET…FGMSFRMQFY (182 aa)) are large ATPase domain (RuvB-L). Residues leucine 21, arginine 22, glycine 63, lysine 66, threonine 67, serine 68, 129–131 (EDF), arginine 172, tyrosine 182, and arginine 219 contribute to the ATP site. Position 67 (threonine 67) interacts with Mg(2+). The segment at 183-253 (NPSELALIIK…ITLHALNELG (71 aa)) is small ATPAse domain (RuvB-S). Positions 256 to 336 (ELGFDEADLA…IPTLNPQTLF (81 aa)) are head domain (RuvB-H). The DNA site is built by arginine 310 and arginine 315.

This sequence belongs to the RuvB family. As to quaternary structure, homohexamer. Forms an RuvA(8)-RuvB(12)-Holliday junction (HJ) complex. HJ DNA is sandwiched between 2 RuvA tetramers; dsDNA enters through RuvA and exits via RuvB. An RuvB hexamer assembles on each DNA strand where it exits the tetramer. Each RuvB hexamer is contacted by two RuvA subunits (via domain III) on 2 adjacent RuvB subunits; this complex drives branch migration. In the full resolvosome a probable DNA-RuvA(4)-RuvB(12)-RuvC(2) complex forms which resolves the HJ.

It localises to the cytoplasm. The catalysed reaction is ATP + H2O = ADP + phosphate + H(+). Its function is as follows. The RuvA-RuvB-RuvC complex processes Holliday junction (HJ) DNA during genetic recombination and DNA repair, while the RuvA-RuvB complex plays an important role in the rescue of blocked DNA replication forks via replication fork reversal (RFR). RuvA specifically binds to HJ cruciform DNA, conferring on it an open structure. The RuvB hexamer acts as an ATP-dependent pump, pulling dsDNA into and through the RuvAB complex. RuvB forms 2 homohexamers on either side of HJ DNA bound by 1 or 2 RuvA tetramers; 4 subunits per hexamer contact DNA at a time. Coordinated motions by a converter formed by DNA-disengaged RuvB subunits stimulates ATP hydrolysis and nucleotide exchange. Immobilization of the converter enables RuvB to convert the ATP-contained energy into a lever motion, pulling 2 nucleotides of DNA out of the RuvA tetramer per ATP hydrolyzed, thus driving DNA branch migration. The RuvB motors rotate together with the DNA substrate, which together with the progressing nucleotide cycle form the mechanistic basis for DNA recombination by continuous HJ branch migration. Branch migration allows RuvC to scan DNA until it finds its consensus sequence, where it cleaves and resolves cruciform DNA. The chain is Holliday junction branch migration complex subunit RuvB from Helicobacter pylori (strain ATCC 700392 / 26695) (Campylobacter pylori).